The chain runs to 362 residues: NAD(P)H-quinone oxidoreductase subunit 1, chloroplastic (362 aa).

Helical transmembrane passes span 26–48 (LIWI…VIVW), 97–119 (FSIG…PLGY), 126–148 (LSIG…LMAG), 163–185 (AAAQ…SLLS), 254–276 (LFYL…LYLG), 296–318 (IIGI…LFLF), and 338–360 (LGWK…FQLV).

Belongs to the complex I subunit 1 family. As to quaternary structure, NDH is composed of at least 16 different subunits, 5 of which are encoded in the nucleus.

It localises to the plastid. The protein resides in the chloroplast thylakoid membrane. The enzyme catalyses a plastoquinone + NADH + (n+1) H(+)(in) = a plastoquinol + NAD(+) + n H(+)(out). It carries out the reaction a plastoquinone + NADPH + (n+1) H(+)(in) = a plastoquinol + NADP(+) + n H(+)(out). Its function is as follows. NDH shuttles electrons from NAD(P)H:plastoquinone, via FMN and iron-sulfur (Fe-S) centers, to quinones in the photosynthetic chain and possibly in a chloroplast respiratory chain. The immediate electron acceptor for the enzyme in this species is believed to be plastoquinone. Couples the redox reaction to proton translocation, and thus conserves the redox energy in a proton gradient. The protein is NAD(P)H-quinone oxidoreductase subunit 1, chloroplastic (ndhA) of Zea mays (Maize).